The primary structure comprises 506 residues: ATP synthase subunit alpha (506 aa).

169 to 176 (GDRQTGKT) contacts ATP.

The protein belongs to the ATPase alpha/beta chains family. F-type ATPases have 2 components, CF(1) - the catalytic core - and CF(0) - the membrane proton channel. CF(1) has five subunits: alpha(3), beta(3), gamma(1), delta(1), epsilon(1). CF(0) has three main subunits: a(1), b(2) and c(9-12). The alpha and beta chains form an alternating ring which encloses part of the gamma chain. CF(1) is attached to CF(0) by a central stalk formed by the gamma and epsilon chains, while a peripheral stalk is formed by the delta and b chains.

It localises to the cell membrane. It carries out the reaction ATP + H2O + 4 H(+)(in) = ADP + phosphate + 5 H(+)(out). Produces ATP from ADP in the presence of a proton gradient across the membrane. The alpha chain is a regulatory subunit. This Acetivibrio thermocellus (strain ATCC 27405 / DSM 1237 / JCM 9322 / NBRC 103400 / NCIMB 10682 / NRRL B-4536 / VPI 7372) (Clostridium thermocellum) protein is ATP synthase subunit alpha.